The following is a 631-amino-acid chain: Methanol dehydrogenase [cytochrome c] subunit 1 (631 aa).

Positions 1–32 are cleaved as a signal peptide; sequence MNRNTPKARGASSLAMAVAMGLAVLTTAPATA. The cysteines at positions 135 and 136 are disulfide-linked. Ca(2+) is bound by residues glutamate 209 and asparagine 293. Aspartate 335 acts as the Proton acceptor in catalysis. Cysteine 418 and cysteine 447 are disulfide-bonded.

This sequence belongs to the bacterial PQQ dehydrogenase family. Heterotetramer composed of 2 alpha and 2 beta subunits. Pyrroloquinoline quinone is required as a cofactor. It depends on Ca(2+) as a cofactor.

It localises to the periplasm. It carries out the reaction 2 Fe(III)-[cytochrome cL] + a primary alcohol = 2 Fe(II)-[cytochrome cL] + an aldehyde + 2 H(+). Functionally, catalyzes the oxidation of primary alcohols including methanol. The polypeptide is Methanol dehydrogenase [cytochrome c] subunit 1 (moxF) (Paracoccus denitrificans).